Here is a 235-residue protein sequence, read N- to C-terminus: Phosphatidylserine decarboxylase proenzyme (235 aa).

Catalysis depends on serine 204, which acts as the Schiff-base intermediate with substrate; via pyruvic acid. Serine 204 carries the pyruvic acid (Ser); by autocatalysis modification.

The protein belongs to the phosphatidylserine decarboxylase family. PSD-A subfamily. As to quaternary structure, heterodimer of a large membrane-associated beta subunit and a small pyruvoyl-containing alpha subunit. It depends on pyruvate as a cofactor. Post-translationally, is synthesized initially as an inactive proenzyme. Formation of the active enzyme involves a self-maturation process in which the active site pyruvoyl group is generated from an internal serine residue via an autocatalytic post-translational modification. Two non-identical subunits are generated from the proenzyme in this reaction, and the pyruvate is formed at the N-terminus of the alpha chain, which is derived from the carboxyl end of the proenzyme. The post-translation cleavage follows an unusual pathway, termed non-hydrolytic serinolysis, in which the side chain hydroxyl group of the serine supplies its oxygen atom to form the C-terminus of the beta chain, while the remainder of the serine residue undergoes an oxidative deamination to produce ammonia and the pyruvoyl prosthetic group on the alpha chain.

It localises to the cell membrane. The enzyme catalyses a 1,2-diacyl-sn-glycero-3-phospho-L-serine + H(+) = a 1,2-diacyl-sn-glycero-3-phosphoethanolamine + CO2. It participates in phospholipid metabolism; phosphatidylethanolamine biosynthesis; phosphatidylethanolamine from CDP-diacylglycerol: step 2/2. Catalyzes the formation of phosphatidylethanolamine (PtdEtn) from phosphatidylserine (PtdSer). The sequence is that of Phosphatidylserine decarboxylase proenzyme from Mycobacterium sp. (strain KMS).